A 1350-amino-acid chain; its full sequence is ABC transporter C family member 13 (1350 aa).

In terms of domain architecture, ABC transmembrane type-1 1 spans 107-390 (NKKSIFIVIL…LPEAIHNLLG (284 aa)). 4 helical membrane-spanning segments follow: residues 111 to 131 (IFIVILCAIFSILSPLCLKYF), 143 to 163 (TFLTGLGYCVLLFVGTFSYTL), 215 to 235 (IGLFADFFWIGHLEIIIFPIQ), and 240 to 260 (LALLCWIVGWSGLVGFGVMII). Residues 462–481 (EKSEEEYETTTTTTDDNNNN) are disordered. A compositionally biased stretch (low complexity) spans 470 to 481 (TTTTTTDDNNNN). The region spanning 473–693 (TTTDDNNNNN…IDFESIMKTK (221 aa)) is the ABC transporter 1 domain. 505 to 512 (GVVGSGKT) serves as a coordination point for ATP. The 288-residue stretch at 774–1061 (KHGSSTFFFI…FVELEVKMNS (288 aa)) folds into the ABC transmembrane type-1 2 domain. A run of 6 helical transmembrane segments spans residues 776–796 (GSSTFFFIATCVVYFFSQAIF), 816–836 (DSFYIFYYIIFIGLFIVTLVI), 887–907 (IDLLLYDLFSDVLYCGSTVVF), 909–929 (ICVMIYISPLISLPFLVLIIV), 1003–1023 (IGVRLEFISALVVFLTAFFSL), and 1029–1049 (GFSVLSVTTAIGMCTYLNWAV). The ABC transporter 2 domain occupies 1103–1337 (IEFRDVEIRY…KNSKFSKLVK (235 aa)). 1137 to 1144 (GRTGAGKS) contacts ATP.

This sequence belongs to the ABC transporter superfamily. ABCC family. Conjugate transporter (TC 3.A.1.208) subfamily.

It is found in the membrane. This Dictyostelium discoideum (Social amoeba) protein is ABC transporter C family member 13 (abcC13).